A 93-amino-acid polypeptide reads, in one-letter code: SH3 domain-binding glutamic acid-rich-like protein 3 (93 aa).

The residue at position 2 (Ser-2) is an N-acetylserine. The O-linked (GalNAc...) serine glycan is linked to Ser-2. Positions 2–93 (SGRRVYSTSV…NTLQEFLKLA (92 aa)) constitute a Glutaredoxin domain. Thr-9 and Thr-12 each carry an O-linked (GalNAc...) threonine glycan.

This sequence belongs to the SH3BGR family. In terms of assembly, homodimer. Interacts with MYO1C (via its IQ motifs); the interaction is dependent on calcium and takes place at membrane ruffles. May be glycosylated.

The protein localises to the cytoplasm. It localises to the cytosol. It is found in the cell projection. The protein resides in the ruffle membrane. Its subcellular location is the nucleus. Functionally, could act as a modulator of glutaredoxin biological activity. May play a role in cytoskeleton organization. The protein is SH3 domain-binding glutamic acid-rich-like protein 3 (SH3BGRL3) of Pongo abelii (Sumatran orangutan).